We begin with the raw amino-acid sequence, 119 residues long: Large ribosomal subunit protein uL22 (119 aa).

This sequence belongs to the universal ribosomal protein uL22 family. In terms of assembly, part of the 50S ribosomal subunit.

Its function is as follows. This protein binds specifically to 23S rRNA; its binding is stimulated by other ribosomal proteins, e.g. L4, L17, and L20. It is important during the early stages of 50S assembly. It makes multiple contacts with different domains of the 23S rRNA in the assembled 50S subunit and ribosome. In terms of biological role, the globular domain of the protein is located near the polypeptide exit tunnel on the outside of the subunit, while an extended beta-hairpin is found that lines the wall of the exit tunnel in the center of the 70S ribosome. The protein is Large ribosomal subunit protein uL22 of Rhodopirellula baltica (strain DSM 10527 / NCIMB 13988 / SH1).